We begin with the raw amino-acid sequence, 330 residues long: GTPase Obg (330 aa).

The region spanning 1 to 159 is the Obg domain; it reads MHFIDEVKIY…MWIHLSLKLL (159 aa). The region spanning 160-327 is the OBG-type G domain; the sequence is SDVGLVGFPN…IVKLALETIK (168 aa). Residues 166–173, 191–195, 212–215, 279–282, and 308–310 each bind GTP; these read GFPNAGKS, FTTLV, DIPG, NKCD, and STY. Mg(2+) is bound by residues serine 173 and threonine 193.

This sequence belongs to the TRAFAC class OBG-HflX-like GTPase superfamily. OBG GTPase family. In terms of assembly, monomer. Requires Mg(2+) as cofactor.

It localises to the cytoplasm. In terms of biological role, an essential GTPase which binds GTP, GDP and possibly (p)ppGpp with moderate affinity, with high nucleotide exchange rates and a fairly low GTP hydrolysis rate. Plays a role in control of the cell cycle, stress response, ribosome biogenesis and in those bacteria that undergo differentiation, in morphogenesis control. The protein is GTPase Obg of Rickettsia massiliae (strain Mtu5).